An 864-amino-acid polypeptide reads, in one-letter code: Alanine--tRNA ligase (864 aa).

Positions 534, 538, 639, and 643 each coordinate Zn(2+).

Belongs to the class-II aminoacyl-tRNA synthetase family. It depends on Zn(2+) as a cofactor.

The protein resides in the cytoplasm. It carries out the reaction tRNA(Ala) + L-alanine + ATP = L-alanyl-tRNA(Ala) + AMP + diphosphate. Catalyzes the attachment of alanine to tRNA(Ala) in a two-step reaction: alanine is first activated by ATP to form Ala-AMP and then transferred to the acceptor end of tRNA(Ala). Also edits incorrectly charged Ser-tRNA(Ala) and Gly-tRNA(Ala) via its editing domain. The chain is Alanine--tRNA ligase from Aster yellows witches'-broom phytoplasma (strain AYWB).